The sequence spans 279 residues: Large ribosomal subunit protein uL2 (279 aa).

Residues 223 to 279 (TVRGSAMNPNDHPHGGGEGRSPVGMDAPRTPWGKRHMGVKTRNNKKSSTSMIVRRRK) form a disordered region. Basic residues predominate over residues 254-267 (WGKRHMGVKTRNNK).

This sequence belongs to the universal ribosomal protein uL2 family. As to quaternary structure, part of the 50S ribosomal subunit. Forms a bridge to the 30S subunit in the 70S ribosome.

In terms of biological role, one of the primary rRNA binding proteins. Required for association of the 30S and 50S subunits to form the 70S ribosome, for tRNA binding and peptide bond formation. It has been suggested to have peptidyltransferase activity; this is somewhat controversial. Makes several contacts with the 16S rRNA in the 70S ribosome. This Ureaplasma urealyticum serovar 10 (strain ATCC 33699 / Western) protein is Large ribosomal subunit protein uL2.